A 299-amino-acid chain; its full sequence is MKKVKAAIIGSGNIGTDLMYKLKNSKVIELNAMIGIDSESDGLKRAKEAGYEVFDNGIQAIIDNPSLADIVFDATSAKAHSYHAKILEELGKIVIDLTPAAYGPFVCPAIRNNDFLDKQNVNMITCGGQATIPIVHAINEVANVTYAEIVATISSLSAGPGTRANIDEFTITTKRGIEEIGGADKGKAIIILNPAEPPILMRDTIYCEVKDMDEVSIYEAIHKMVERVRTYVPGYSLKQEPMFDGNRVTVFLEVEGAGDYFPPYAGNLDIMTAAALKVGEEFATQIVSEKKRGVMNEAK.

11 to 14 (SGNI) lines the NAD(+) pocket. Cys126 (acyl-thioester intermediate) is an active-site residue. Residues 157 to 165 (SAGPGTRAN) and Asn267 contribute to the NAD(+) site.

This sequence belongs to the acetaldehyde dehydrogenase family.

It catalyses the reaction acetaldehyde + NAD(+) + CoA = acetyl-CoA + NADH + H(+). The polypeptide is Acetaldehyde dehydrogenase (Bacillus cereus (strain ATCC 10987 / NRS 248)).